The sequence spans 395 residues: Elongation factor Tu (395 aa).

In terms of domain architecture, tr-type G spans 10–204 (KPHVNIGTIG…AVDEYIPTPQ (195 aa)). Residues 19 to 26 (GHVDHGKT) form a G1 region. 19-26 (GHVDHGKT) lines the GTP pocket. Thr-26 is a binding site for Mg(2+). The segment at 60–64 (GITIS) is G2. Positions 81–84 (DCPG) are G3. Residues 81 to 85 (DCPGH) and 136 to 139 (NKCD) contribute to the GTP site. Positions 136–139 (NKCD) are G4. Residues 174–176 (SAL) are G5.

The protein belongs to the TRAFAC class translation factor GTPase superfamily. Classic translation factor GTPase family. EF-Tu/EF-1A subfamily. Monomer.

Its subcellular location is the cytoplasm. The catalysed reaction is GTP + H2O = GDP + phosphate + H(+). Functionally, GTP hydrolase that promotes the GTP-dependent binding of aminoacyl-tRNA to the A-site of ribosomes during protein biosynthesis. This is Elongation factor Tu from Geobacillus stearothermophilus (Bacillus stearothermophilus).